We begin with the raw amino-acid sequence, 129 residues long: M-zodatoxin-Lt8l (129 aa).

An N-terminal signal peptide occupies residues Met-1–Ser-20. The propeptide occupies Lys-21–Arg-60.

This sequence belongs to the cationic peptide 06 (cytoinsectotoxin) family. As to expression, expressed by the venom gland.

Its subcellular location is the secreted. In terms of biological role, insecticidal, cytolytic and antimicrobial peptide. Forms voltage-dependent, ion-permeable channels in membranes. At high concentration causes cell membrane lysis. This Lachesana tarabaevi (Spider) protein is M-zodatoxin-Lt8l (cit 1-12).